A 233-amino-acid chain; its full sequence is Large ribosomal subunit protein eL6y (233 aa).

A compositionally biased stretch (basic and acidic residues) spans 48-72 (HDAKSKVDAPVEKPPKFYPAEDVKK). Positions 48-82 (HDAKSKVDAPVEKPPKFYPAEDVKKPLPNRRTAKP) are disordered.

It belongs to the eukaryotic ribosomal protein eL6 family.

The chain is Large ribosomal subunit protein eL6y (RPL6B) from Arabidopsis thaliana (Mouse-ear cress).